The primary structure comprises 260 residues: Hydroxyethylthiazole kinase 1 (260 aa).

Methionine 39 is a substrate binding site. Arginine 115 and threonine 160 together coordinate ATP. Glycine 187 contributes to the substrate binding site.

Belongs to the Thz kinase family. Mg(2+) is required as a cofactor.

The catalysed reaction is 5-(2-hydroxyethyl)-4-methylthiazole + ATP = 4-methyl-5-(2-phosphooxyethyl)-thiazole + ADP + H(+). It participates in cofactor biosynthesis; thiamine diphosphate biosynthesis; 4-methyl-5-(2-phosphoethyl)-thiazole from 5-(2-hydroxyethyl)-4-methylthiazole: step 1/1. Functionally, catalyzes the phosphorylation of the hydroxyl group of 4-methyl-5-beta-hydroxyethylthiazole (THZ). This is Hydroxyethylthiazole kinase 1 from Streptococcus pneumoniae (strain JJA).